Reading from the N-terminus, the 455-residue chain is Kynurenine 3-monooxygenase (455 aa).

Belongs to the aromatic-ring hydroxylase family. KMO subfamily. The cofactor is FAD.

It catalyses the reaction L-kynurenine + NADPH + O2 + H(+) = 3-hydroxy-L-kynurenine + NADP(+) + H2O. It participates in cofactor biosynthesis; NAD(+) biosynthesis; quinolinate from L-kynurenine: step 1/3. Its function is as follows. Catalyzes the hydroxylation of L-kynurenine (L-Kyn) to form 3-hydroxy-L-kynurenine (L-3OHKyn). Required for synthesis of quinolinic acid. The polypeptide is Kynurenine 3-monooxygenase (Stenotrophomonas maltophilia (strain K279a)).